A 374-amino-acid chain; its full sequence is MSKRDYYEVLGVERGASEADLKKAYRRLAMKYHPDRNPGDKESEDKFKEANEAYEVLSDASKRAAFDQYGHAGVDPSMGGGGAGFGGANFSDIFGDVFSDFFGGGRGGGRGGAQRGSDLRYTLELNLEEAVRGTTVSIRVPTLVNCQPCDGSGAKKGSTPSTCPTCGGIGQVRMQQGFFSVQQTCPRCHGQGKIITDPCTSCHGEGRVEEYKTLSVKVPAGVDTGDRIRLSGEGEAGTHGGPTGDLYVVISVREHEIFQRDGKHLYCEVPISYTDAALGGELEVPTLDGRVKLKIPEGTQTGKQFRLRGKGVAPVRGGGAGDLLCRVAVETPVNLSRRQRELLEELRDSLEGDSSHSPKASGWFDGVKRFFGDL.

The J domain maps to 5 to 70 (DYYEVLGVER…SKRAAFDQYG (66 aa)). The segment at 133–211 (GTTVSIRVPT…CHGEGRVEEY (79 aa)) adopts a CR-type zinc-finger fold. Positions 146, 149, 163, 166, 185, 188, 199, and 202 each coordinate Zn(2+). 4 CXXCXGXG motif repeats span residues 146–153 (CQPCDGSG), 163–170 (CPTCGGIG), 185–192 (CPRCHGQG), and 199–206 (CTSCHGEG).

Belongs to the DnaJ family. Homodimer. Zn(2+) is required as a cofactor.

The protein localises to the cytoplasm. Participates actively in the response to hyperosmotic and heat shock by preventing the aggregation of stress-denatured proteins and by disaggregating proteins, also in an autonomous, DnaK-independent fashion. Unfolded proteins bind initially to DnaJ; upon interaction with the DnaJ-bound protein, DnaK hydrolyzes its bound ATP, resulting in the formation of a stable complex. GrpE releases ADP from DnaK; ATP binding to DnaK triggers the release of the substrate protein, thus completing the reaction cycle. Several rounds of ATP-dependent interactions between DnaJ, DnaK and GrpE are required for fully efficient folding. Also involved, together with DnaK and GrpE, in the DNA replication of plasmids through activation of initiation proteins. In Pseudomonas putida (strain GB-1), this protein is Chaperone protein DnaJ.